The following is a 227-amino-acid chain: Protein GrpE (227 aa).

Polar residues predominate over residues 1-18; sequence MTQGNQKTEGNPPEQVTV. 2 disordered regions span residues 1-57 and 193-227; these read MTQG…GAAT and TEEGDGEAAATDEPTAAAAETRPPESDDNAGASGD. A compositionally biased stretch (basic and acidic residues) spans 19 to 35; that stretch reads TDKRRIDPETGEVRHVP. 2 stretches are compositionally biased toward low complexity: residues 41–50 and 199–213; these read GGTAPQAATA and EAAATDEPTAAAAET.

It belongs to the GrpE family. As to quaternary structure, homodimer.

It is found in the cytoplasm. Participates actively in the response to hyperosmotic and heat shock by preventing the aggregation of stress-denatured proteins, in association with DnaK and GrpE. It is the nucleotide exchange factor for DnaK and may function as a thermosensor. Unfolded proteins bind initially to DnaJ; upon interaction with the DnaJ-bound protein, DnaK hydrolyzes its bound ATP, resulting in the formation of a stable complex. GrpE releases ADP from DnaK; ATP binding to DnaK triggers the release of the substrate protein, thus completing the reaction cycle. Several rounds of ATP-dependent interactions between DnaJ, DnaK and GrpE are required for fully efficient folding. The chain is Protein GrpE from Mycolicibacterium paratuberculosis (strain ATCC BAA-968 / K-10) (Mycobacterium paratuberculosis).